A 270-amino-acid polypeptide reads, in one-letter code: Phosphatidylinositol transfer protein alpha isoform (270 aa).

The a 1,2-diacyl-sn-glycero-3-phospho-(1D-myo-inositol) site is built by threonine 58, lysine 60, glutamate 85, asparagine 89, threonine 96, and lysine 194. Lysine 215 is subject to N6-acetyllysine. Residues 250-263 (TKRQLDEMRQKDPV) show a composition bias toward basic and acidic residues. A disordered region spans residues 250–270 (TKRQLDEMRQKDPVKGMTADD).

It belongs to the PtdIns transfer protein family. PI transfer class I subfamily.

Its subcellular location is the cytoplasm. The protein resides in the nucleus. It catalyses the reaction a 1,2-diacyl-sn-glycero-3-phosphocholine(in) = a 1,2-diacyl-sn-glycero-3-phosphocholine(out). It carries out the reaction a 1,2-diacyl-sn-glycero-3-phospho-(1D-myo-inositol)(in) = a 1,2-diacyl-sn-glycero-3-phospho-(1D-myo-inositol)(out). Its activity is regulated as follows. Phosphatidylinositol transfer activity is inhibited by N-ethylmaleimide. Catalyzes the transfer of phosphatidylinositol (PI) and phosphatidylcholine (PC) between membranes. Shows a preference for PI and PC containing shorter saturated or monosaturated acyl chains at the sn-1 and sn-2 positions. Preference order for PC is C16:1 &gt; C16:0 &gt; C18:1 &gt; C18:0 &gt; C20:4 and for PI is C16:1 &gt; C16:0 &gt; C18:1 &gt; C18:0 &gt; C20:4 &gt; C20:3. This chain is Phosphatidylinositol transfer protein alpha isoform (PITPNA), found in Homo sapiens (Human).